The following is a 1204-amino-acid chain: Exportin-5 (1204 aa).

The interval 1–108 (MEMEQVNALC…ANGTLRILEE (108 aa)) is necessary for interaction with Ran. Residue Lys-396 is modified to N6-acetyllysine. The necessary for interaction with ILF3 stretch occupies residues 533–640 (ELLQLVLNFE…KQLLSNELLL (108 aa)). The tract at residues 641-642 (TQ) is pre-siRNA binding.

Belongs to the exportin family. In terms of assembly, component of a nuclear export receptor complex composed of XPO5, RAN, dsRNA-binding proteins and dsRNA. Found in a nuclear export complex with XPO5, RAN, EEF1A1, and aminoacylated tRNA. Found in a nuclear export complex with XPO5, RAN, ILF3 and dsRNA. Found in a nuclear export complex with XPO5, RAN and pre-miRNA. Found in a nuclear export complex with XPO5, RAN, ILF3 and minihelix VA1 dsRNA. Found in a nuclear export complex with XPO5, RAN, ILF3, ZNF346 and dsRNA. Interacts with EEF1A1, ILF3, NUP153, NUP214 and ZNF346. Interacts with RAN and cargo proteins in a GTP-dependent manner. Interacts with ADAR/ADAR1 (via DRBM domains). Interacts with SMAD4; mediates nuclear export of SMAD4. Interacts with RAN (GTP-bound form).

The protein localises to the nucleus. Its subcellular location is the cytoplasm. Its function is as follows. Mediates the nuclear export of proteins bearing a double-stranded RNA binding domain (dsRBD) and double-stranded RNAs (cargos). XPO5 in the nucleus binds cooperatively to the RNA and to the GTPase Ran in its active GTP-bound form. Proteins containing dsRBDs can associate with this trimeric complex through the RNA. Docking of this complex to the nuclear pore complex (NPC) is mediated through binding to nucleoporins. Upon transit of a nuclear export complex into the cytoplasm, hydrolysis of Ran-GTP to Ran-GDP (induced by RANBP1 and RANGAP1, respectively) cause disassembly of the complex and release of the cargo from the export receptor. XPO5 then returns to the nuclear compartment by diffusion through the nuclear pore complex, to mediate another round of transport. The directionality of nuclear export is thought to be conferred by an asymmetric distribution of the GTP- and GDP-bound forms of Ran between the cytoplasm and nucleus. Overexpression may in some circumstances enhance RNA-mediated gene silencing (RNAi). Mediates nuclear export of ADAR/ADAR1 in a RanGTP-dependent manner. Mediates the nuclear export of micro-RNA precursors, which form short hairpins. Also mediates the nuclear export of synthetic short hairpin RNAs used for RNA interference. In some circumstances can also mediate the nuclear export of deacylated and aminoacylated tRNAs. Specifically recognizes dsRNAs that lack a 5'-overhang in a sequence-independent manner, have only a short 3'-overhang, and that have a double-stranded length of at least 15 base-pairs. Binding is dependent on Ran-GTP. The sequence is that of Exportin-5 (Xpo5) from Mus musculus (Mouse).